A 33-amino-acid polypeptide reads, in one-letter code: Neutrophil defensin 4 (33 aa).

Cystine bridges form between C3-C31, C5-C20, and C10-C30.

Belongs to the alpha-defensin family. HANP-2 could be a product of proteolytic N-terminal amino acid removal from HANP-4.

It localises to the secreted. Functionally, bactericidal activity, greater against Gram-positive bacteria. Low anti-fungi activity. In Mesocricetus auratus (Golden hamster), this protein is Neutrophil defensin 4.